A 1772-amino-acid polypeptide reads, in one-letter code: Merozoite surface protein 1 (1772 aa).

Residues 1 to 18 form the signal peptide; it reads MKVIGLLFSFVFFAIKCK. Residue asparagine 54 is glycosylated (N-linked (GlcNAc...) asparagine). The disordered stretch occupies residues 290–319; it reads TGGQSSTEPGSGGSSASGTSSSGQASAGTG. Residues 305 to 319 show a composition bias toward low complexity; sequence ASGTSSSGQASAGTG. 2 N-linked (GlcNAc...) asparagine glycosylation sites follow: asparagine 406 and asparagine 646. The interval 703-796 is disordered; the sequence is KERMEQGPAI…QPSQAASSTT (94 aa). A compositionally biased stretch (low complexity) spans 724–796; the sequence is SAESSTDRST…QPSQAASSTT (73 aa). N-linked (GlcNAc...) asparagine glycosylation occurs at asparagine 829. The tract at residues 924–1070 is disordered; the sequence is AAPTPVTPAA…SRAESEEDMP (147 aa). Low complexity-rich tracts occupy residues 930-946 and 956-1052; these read TPAA…PDVQ and SQQP…NSQS. N-linked (GlcNAc...) asparagine glycosylation is found at asparagine 1018 and asparagine 1090. The disordered stretch occupies residues 1362–1383; sequence GAVPGSGTDTRVAGSSVDDNED. Asparagine 1408, asparagine 1446, asparagine 1541, and asparagine 1629 each carry an N-linked (GlcNAc...) asparagine glycan. 2 consecutive EGF-like domains span residues 1661–1703 and 1704–1752; these read HVCV…VENN and NPTC…FCSS. A disulfide bridge connects residues cysteine 1663 and cysteine 1675. The N-linked (GlcNAc...) asparagine glycan is linked to asparagine 1680. Disulfide bonds link cysteine 1687-cysteine 1699, cysteine 1707-cysteine 1720, cysteine 1714-cysteine 1734, and cysteine 1736-cysteine 1750. A lipid anchor (GPI-anchor amidated serine) is attached at serine 1751. The propeptide at 1752 to 1772 is removed in mature form; the sequence is SSSFMGLSILLIITLIVFNIF.

Forms a complex composed of subunits p83, p30, p38, and p42 which remain non-covalently associated; the complex is formed at the merozoite surface prior to egress from host erythrocytes. Post-translationally, the p230 precursor is cleaved by SUB1 prior to merozoite egress into 4 subunits p83, p30, p38, and p42 which remain non-covalently associated. In a second processing step during erythrocyte invasion, p42 is cleaved by SUB2 into p33 and p19; the latter remains attached to the merozoite surface via its GPI-anchor and stays on the surface during the subsequent ring stage.

The protein resides in the cell membrane. It is found in the secreted. Its function is as follows. During the asexual blood stage, involved in merozoite egress from host erythrocytes possibly via its interaction with the host cytoskeleton protein spectrin resulting in the destabilization of the host cytoskeleton and thus leading to erythrocyte cell membrane rupture. Involved in the binding to host erythrocytes and is required for host erythrocyte invasion. The sequence is that of Merozoite surface protein 1 from Plasmodium yoelii yoelii.